A 70-amino-acid chain; its full sequence is Putative membrane protein insertion efficiency factor (70 aa).

Belongs to the UPF0161 family.

The protein resides in the cell membrane. Its function is as follows. Could be involved in insertion of integral membrane proteins into the membrane. This Clostridium novyi (strain NT) protein is Putative membrane protein insertion efficiency factor.